We begin with the raw amino-acid sequence, 204 residues long: N-(5'-phosphoribosyl)anthranilate isomerase (204 aa).

The protein belongs to the TrpF family.

The catalysed reaction is N-(5-phospho-beta-D-ribosyl)anthranilate = 1-(2-carboxyphenylamino)-1-deoxy-D-ribulose 5-phosphate. It functions in the pathway amino-acid biosynthesis; L-tryptophan biosynthesis; L-tryptophan from chorismate: step 3/5. The sequence is that of N-(5'-phosphoribosyl)anthranilate isomerase from Bacillus cereus (strain ZK / E33L).